The sequence spans 610 residues: Menin (610 aa).

The interaction with FANCD2 stretch occupies residues 214–390; the sequence is GVAERSWLYL…SLLEAGEERP (177 aa). Positions 462–552 are disordered; that stretch reads AEAAEAEELW…SPPPEGPVLT (91 aa). Residues 484 to 500 are compositionally biased toward basic and acidic residues; sequence RRESKPEEPPPPKKPAL. S487 and S543 each carry phosphoserine. A compositionally biased stretch (pro residues) spans 537 to 548; the sequence is APAPAASPPPEG. T594 is subject to Phosphothreonine.

In terms of assembly, component of the MLL-HCF complex, at least composed of KMT2A/MLL1, MEN1, ASH2L, RBBP5, DPY30, WDR5, HCFC1 and HCFC2. Component of the menin-associated histone methyltransferase complex, at least composed of KMT2B/MLL4, MEN1, ASH2L, RBBP5, DPY30 and WDR5. Interacts with POLR2B. Interacts with POLR2A phosphorylated at 'Ser-5', but not with the unphosphorylated, nor 'Ser-2' phosphorylated POLR2A forms. Interacts with FANCD2 and DBF4. Interacts with SMAD3, but not with SMAD2, nor SMAD4. Directly interacts with NFKB1, NFKB2 and RELA. Interacts with JUND (via MBM motif); inhibits the interaction of JUND with MAPK10 and the phosphorylation of JUND by MAP kinases MAPK8 and MAPK10. Interacts with KMT2A (via MBM motif). The KMT2A-MEN1 complex interacts with PSIP1 with a greater affinity as MEN1 enhances interaction of KMT2A with PSIP1.

The protein resides in the nucleus. In terms of biological role, essential component of a MLL/SET1 histone methyltransferase (HMT) complex, a complex that specifically methylates 'Lys-4' of histone H3 (H3K4). Functions as a transcriptional regulator. Binds to the TERT promoter and represses telomerase expression. Plays a role in TGFB1-mediated inhibition of cell-proliferation, possibly regulating SMAD3 transcriptional activity. Represses JUND-mediated transcriptional activation on AP1 sites, as well as that mediated by NFKB subunit RELA. Positively regulates HOXC8 and HOXC6 gene expression. May be involved in normal hematopoiesis through the activation of HOXA9 expression. May be involved in DNA repair. The sequence is that of Menin (MEN1) from Canis lupus familiaris (Dog).